Reading from the N-terminus, the 382-residue chain is Cytochrome c biogenesis CcmF N-terminal-like mitochondrial protein 1 (382 aa).

4 helical membrane-spanning segments follow: residues 1 to 21 (MSIS…FVAF), 30 to 50 (AFGA…LLFC), 79 to 99 (HEGS…FFCY), and 117 to 137 (SLFF…LLRY).

Belongs to the CcmF/CycK/Ccl1/NrfE/CcsA family. As to quaternary structure, interacts with CCMFN2 and CCMH.

The protein resides in the mitochondrion inner membrane. Functionally, forms a complex with CCMFC, CCMFN2 and CCMH that performs the assembly of heme with c-type apocytochromes in mitochondria. This Arabidopsis thaliana (Mouse-ear cress) protein is Cytochrome c biogenesis CcmF N-terminal-like mitochondrial protein 1.